Reading from the N-terminus, the 393-residue chain is Pigment production hydroxylase (393 aa).

Involved in pigment production acting as a hydroxylase that transforms indole to indoxyl, resulting in the formation of indigo. The chain is Pigment production hydroxylase from Rhodococcus erythropolis (Arthrobacter picolinophilus).